Reading from the N-terminus, the 295-residue chain is Bifunctional protein FolD (295 aa).

NADP(+) contacts are provided by residues glycine 166–serine 168, serine 195, and isoleucine 236.

The protein belongs to the tetrahydrofolate dehydrogenase/cyclohydrolase family. Homodimer.

The catalysed reaction is (6R)-5,10-methylene-5,6,7,8-tetrahydrofolate + NADP(+) = (6R)-5,10-methenyltetrahydrofolate + NADPH. It catalyses the reaction (6R)-5,10-methenyltetrahydrofolate + H2O = (6R)-10-formyltetrahydrofolate + H(+). Its pathway is one-carbon metabolism; tetrahydrofolate interconversion. Catalyzes the oxidation of 5,10-methylenetetrahydrofolate to 5,10-methenyltetrahydrofolate and then the hydrolysis of 5,10-methenyltetrahydrofolate to 10-formyltetrahydrofolate. The sequence is that of Bifunctional protein FolD from Chlorobium chlorochromatii (strain CaD3).